A 326-amino-acid chain; its full sequence is tRNA-modifying protein YgfZ (326 aa).

Folate contacts are provided by W27 and W189.

This sequence belongs to the tRNA-modifying YgfZ family.

It localises to the cytoplasm. Folate-binding protein involved in regulating the level of ATP-DnaA and in the modification of some tRNAs. It is probably a key factor in regulatory networks that act via tRNA modification, such as initiation of chromosomal replication. This is tRNA-modifying protein YgfZ from Escherichia coli O157:H7 (strain EC4115 / EHEC).